Here is a 194-residue protein sequence, read N- to C-terminus: MSDVDADEARKMAERERKKEEVRKRLEEASRMKKAKKGFLTPERKKKLRKLLMMKAAEDLKQQQMLKEQERQRILQERIIPLPDLDNEDDLEAVYDEIRERLIDLESENYDVSYIVRQKDFEINELTIAVNDLRGKFVKPTLKKVSKTEGKFDKLKKKEATKVDFRAQLKVVDKNEFALDEEDTEKKEKAAWAK.

The tract at residues 1-27 (MSDVDADEARKMAERERKKEEVRKRLE) is disordered. The span at 7–27 (DEARKMAERERKKEEVRKRLE) shows a compositional bias: basic and acidic residues.

Belongs to the troponin I family. In terms of tissue distribution, expression is detected only in pharyngeal muscle cells from embryos to adults.

Functionally, troponin I is the inhibitory subunit of troponin, the thin filament regulatory complex which confers calcium-sensitivity to muscle actomyosin ATPase activity. The protein is Troponin I 4 (tni-4) of Caenorhabditis elegans.